The following is a 393-amino-acid chain: Na(+)/H(+) antiporter NhaA (393 aa).

The next 11 membrane-spanning stretches (helical) occupy residues 24-44 (GGLV…SPLA), 58-78 (LSLL…LVGL), 96-116 (ILPG…YILF), 126-146 (GWAI…SLFG), 155-175 (IFLA…IALF), 178-198 (SDLN…LYGM), 214-234 (AVLW…GVLL), 267-287 (VAFI…FSGV), 300-320 (VAAG…FLLV), 338-358 (GVAA…LLAF), and 369-389 (MGIL…LATF).

It belongs to the NhaA Na(+)/H(+) (TC 2.A.33) antiporter family.

It localises to the cell inner membrane. It carries out the reaction Na(+)(in) + 2 H(+)(out) = Na(+)(out) + 2 H(+)(in). Its function is as follows. Na(+)/H(+) antiporter that extrudes sodium in exchange for external protons. This chain is Na(+)/H(+) antiporter NhaA, found in Rhizobium etli (strain ATCC 51251 / DSM 11541 / JCM 21823 / NBRC 15573 / CFN 42).